An 858-amino-acid chain; its full sequence is Piwi-like protein 1 (858 aa).

The segment covering 1-13 (MTGRARARSRGRG) has biased composition (basic residues). The disordered stretch occupies residues 1–56 (MTGRARARSRGRGRGQEPAAPGAQPPVSQEAAKPVVSTPSEGQLVGRGRQKPAPGA). Over residues 16 to 26 (QEPAAPGAQPP) the composition is skewed to low complexity. In terms of domain architecture, PAZ spans 276–388 (TVLDFMYSLR…LVPEFCYLTG (113 aa)). The interval 314–316 (TYR) is required for binding 2'-O-methylated 3'-end of piRNAs. An MID region region spans residues 476–612 (SKEMRGLPLI…LQMNCKMGGE (137 aa)). In terms of domain architecture, Piwi spans 552–844 (MVVVILPTNR…LAFLVGQSIH (293 aa)). Residues aspartate 629, glutamate 667, aspartate 699, and histidine 833 contribute to the active site.

The protein belongs to the argonaute family. Piwi subfamily. Requires Mg(2+) as cofactor. In terms of processing, methylated on arginine residues; required for the interaction with Tudor domain-containing protein and subsequent localization to the meiotic nuage, also named P granule. As to expression, expressed exclusively in the adult gonads; expression in the ovary weaker than in the testis (at protein level). During neurogenesis and organogenesis, expression is detected in CNS (midbrain and eye) and fin buds. Starting from 24 hours post-fertilization, expression is found in the genital ridge.

Its subcellular location is the cytoplasm. In terms of biological role, plays a central role during gametogenesis by repressing transposable elements and preventing their mobilization, which is essential for the germline integrity. Acts via the piRNA metabolic process, which mediates the repression of transposable elements during meiosis by forming complexes composed of piRNAs and Piwi proteins and governs the methylation and subsequent repression of transposons. Directly binds methylated piRNAs, a class of 24 to 30 nucleotide RNAs that are generated by a Dicer-independent mechanism and are primarily derived from transposons and other repeated sequence elements. Has a strong preference for piRNAs with a uridine nucleotide at their 5'-end (g1U preference, also named 1U-bias) and binds piRNAs in an opposite direction compared to piwil2/zili. Participates in a piRNA amplification loop with piwil2/zili. Not involved in the piRNA amplification loop, also named ping-pong amplification cycle. Acts as an endoribonuclease that cleaves transposon messenger RNAs. The polypeptide is Piwi-like protein 1 (piwil1) (Danio rerio (Zebrafish)).